Consider the following 292-residue polypeptide: Ribosomal RNA small subunit methyltransferase I (292 aa).

Belongs to the methyltransferase superfamily. RsmI family.

The protein resides in the cytoplasm. The catalysed reaction is cytidine(1402) in 16S rRNA + S-adenosyl-L-methionine = 2'-O-methylcytidine(1402) in 16S rRNA + S-adenosyl-L-homocysteine + H(+). Its function is as follows. Catalyzes the 2'-O-methylation of the ribose of cytidine 1402 (C1402) in 16S rRNA. The protein is Ribosomal RNA small subunit methyltransferase I of Buchnera aphidicola subsp. Baizongia pistaciae (strain Bp).